Consider the following 151-residue polypeptide: Neuroglobin (151 aa).

The Globin domain maps to 1–149 (MERPEPELIR…VVQAMSRGWD (149 aa)). 2 residues coordinate heme b: H64 and H96.

Belongs to the globin family. As to quaternary structure, monomer. Homodimer and homotetramer; disulfide-linked. Mainly monomeric but also detected as part of homodimers and homotetramers. Interacts with 14-3-3 proteins; regulates the phosphorylation of NGB. Could interact (ferrous form) with G-alpha(i) proteins (GTP-bound form). Phosphorylated during hypoxia by ERK1/ERK2. Phosphorylation regulates the heme pocket hexacoordination preventing the association of His-64 with the heme metal center. Thereby, promotes the access of dioxygen and nitrite to the heme and stimulates the nitrite reductase activity. Phosphorylation during hypoxia is stabilized by 14-3-3 proteins.

Its subcellular location is the cytoplasm. It localises to the cytosol. The protein localises to the mitochondrion matrix. The catalysed reaction is Fe(III)-heme b-[protein] + nitric oxide + H2O = Fe(II)-heme b-[protein] + nitrite + 2 H(+). Monomeric globin with a bis-histidyl six-coordinate heme-iron atom through which it can bind dioxygen, carbon monoxide and nitric oxide. Could help transport oxygen and increase its availability to the metabolically active neuronal tissues, though its low quantity in tissues as well as its high affinity for dioxygen, which may limit its oxygen-releasing ability, argue against it. The ferrous/deoxygenated form exhibits a nitrite reductase activity and it could produce nitric oxide which in turn inhibits cellular respiration in response to hypoxia. In its ferrous/deoxygenated state, it may also exhibit GDI (Guanine nucleotide Dissociation Inhibitor) activity toward heterotrimeric G-alpha proteins, thereby regulating signal transduction to facilitate neuroprotective responses in the wake of hypoxia and associated oxidative stress. This chain is Neuroglobin, found in Canis lupus familiaris (Dog).